Consider the following 309-residue polypeptide: Methionyl-tRNA formyltransferase (309 aa).

107–110 (SLLP) contacts (6S)-5,6,7,8-tetrahydrofolate.

This sequence belongs to the Fmt family.

The enzyme catalyses L-methionyl-tRNA(fMet) + (6R)-10-formyltetrahydrofolate = N-formyl-L-methionyl-tRNA(fMet) + (6S)-5,6,7,8-tetrahydrofolate + H(+). Functionally, attaches a formyl group to the free amino group of methionyl-tRNA(fMet). The formyl group appears to play a dual role in the initiator identity of N-formylmethionyl-tRNA by promoting its recognition by IF2 and preventing the misappropriation of this tRNA by the elongation apparatus. This is Methionyl-tRNA formyltransferase from Borrelia turicatae (strain 91E135).